The following is a 698-amino-acid chain: Dynein regulatory complex protein 1 (698 aa).

Composition is skewed to basic and acidic residues over residues 27-47 (ALRE…EIGK) and 76-90 (AGDD…QEEQ). 2 disordered regions span residues 27–50 (ALRE…KGKQ) and 71–90 (SSVR…QEEQ). Residues 183–367 (MSRQFVEVQN…DLQSKFRHFE (185 aa)) are a coiled coil. The interval 425–461 (SGGGAAAAATGGAAGGAAAAGGVGPNGEEESEEDAAA) is disordered. The span at 436–449 (GAAGGAAAAGGVGP) shows a compositional bias: gly residues. A coiled-coil region spans residues 655–685 (QERAGSLRDVESLQHQNNELRALLNQYLSSR).

This sequence belongs to the DRC1 family. Component of the nexin-dynein regulatory complex (N-DRC). Interacts with DRC4 and DRC5.

Its subcellular location is the cytoplasm. The protein resides in the cytoskeleton. It localises to the cilium axoneme. It is found in the flagellum axoneme. Its function is as follows. Component of the nexin-dynein regulatory complex (N-DRC) a key regulator of ciliary/flagellar motility which maintains the alignment and integrity of the distal axoneme and regulates microtubule sliding in motile axonemes. Plays a critical role in the assembly of N-DRC and also stabilizes the assembly of multiple inner dynein arms and radial spokes. Coassembles with DRC2 to form a central scaffold needed for assembly of the N-DRC and its attachment to the outer doublet microtubules. The chain is Dynein regulatory complex protein 1 (DRC1) from Chlamydomonas reinhardtii (Chlamydomonas smithii).